Consider the following 356-residue polypeptide: Protein RecA (356 aa).

71 to 78 (GPESSGKT) lines the ATP pocket.

It belongs to the RecA family.

The protein resides in the cytoplasm. Functionally, can catalyze the hydrolysis of ATP in the presence of single-stranded DNA, the ATP-dependent uptake of single-stranded DNA by duplex DNA, and the ATP-dependent hybridization of homologous single-stranded DNAs. It interacts with LexA causing its activation and leading to its autocatalytic cleavage. The polypeptide is Protein RecA (Synechococcus elongatus (strain ATCC 33912 / PCC 7942 / FACHB-805) (Anacystis nidulans R2)).